Here is a 119-residue protein sequence, read N- to C-terminus: uncharacterized protein (119 aa).

This is an uncharacterized protein from Saccharomyces cerevisiae (strain ATCC 204508 / S288c) (Baker's yeast).